A 346-amino-acid chain; its full sequence is Very-long-chain 3-oxoacyl-CoA reductase (346 aa).

The chain crosses the membrane as a helical span at residues alanine 23–serine 43. The NADP(+) site is built by valine 69, aspartate 123, asparagine 150, tyrosine 222, lysine 226, valine 255, and serine 257. The active-site Proton donor is tyrosine 222. Lysine 226 (lowers pKa of active site Tyr) is an active-site residue.

This sequence belongs to the short-chain dehydrogenases/reductases (SDR) family.

The protein localises to the endoplasmic reticulum membrane. The enzyme catalyses a very-long-chain (3R)-3-hydroxyacyl-CoA + NADP(+) = a very-long-chain 3-oxoacyl-CoA + NADPH + H(+). The protein operates within lipid metabolism; fatty acid biosynthesis. In terms of biological role, component of the microsomal membrane bound fatty acid elongation system, which produces the 26-carbon very long-chain fatty acids (VLCFA) from palmitate. Catalyzes the reduction of the 3-ketoacyl-CoA intermediate that is formed in each cycle of fatty acid elongation. VLCFAs serve as precursors for ceramide and sphingolipids. This chain is Very-long-chain 3-oxoacyl-CoA reductase, found in Kluyveromyces lactis (strain ATCC 8585 / CBS 2359 / DSM 70799 / NBRC 1267 / NRRL Y-1140 / WM37) (Yeast).